Reading from the N-terminus, the 320-residue chain is Aspartate carbamoyltransferase catalytic subunit (320 aa).

Residues Arg-70 and Thr-71 each coordinate carbamoyl phosphate. Lys-98 provides a ligand contact to L-aspartate. Residues Arg-120, His-150, and Gln-153 each contribute to the carbamoyl phosphate site. Residues Arg-184 and Arg-239 each contribute to the L-aspartate site. The carbamoyl phosphate site is built by Gly-280 and Pro-281.

This sequence belongs to the aspartate/ornithine carbamoyltransferase superfamily. ATCase family. As to quaternary structure, heterododecamer (2C3:3R2) of six catalytic PyrB chains organized as two trimers (C3), and six regulatory PyrI chains organized as three dimers (R2).

The catalysed reaction is carbamoyl phosphate + L-aspartate = N-carbamoyl-L-aspartate + phosphate + H(+). The protein operates within pyrimidine metabolism; UMP biosynthesis via de novo pathway; (S)-dihydroorotate from bicarbonate: step 2/3. Functionally, catalyzes the condensation of carbamoyl phosphate and aspartate to form carbamoyl aspartate and inorganic phosphate, the committed step in the de novo pyrimidine nucleotide biosynthesis pathway. The sequence is that of Aspartate carbamoyltransferase catalytic subunit from Xylella fastidiosa (strain Temecula1 / ATCC 700964).